Here is a 642-residue protein sequence, read N- to C-terminus: tRNA uridine 5-carboxymethylaminomethyl modification enzyme MnmG (642 aa).

FAD is bound by residues 12 to 17 (GAGHAG), Val124, and Ser179. Residue 272–286 (GPRYCPSIEDKITRF) coordinates NAD(+). Gln369 is a binding site for FAD.

It belongs to the MnmG family. As to quaternary structure, homodimer. Heterotetramer of two MnmE and two MnmG subunits. Requires FAD as cofactor.

Its subcellular location is the cytoplasm. Functionally, NAD-binding protein involved in the addition of a carboxymethylaminomethyl (cmnm) group at the wobble position (U34) of certain tRNAs, forming tRNA-cmnm(5)s(2)U34. The sequence is that of tRNA uridine 5-carboxymethylaminomethyl modification enzyme MnmG from Bdellovibrio bacteriovorus (strain ATCC 15356 / DSM 50701 / NCIMB 9529 / HD100).